Here is a 183-residue protein sequence, read N- to C-terminus: Glutamyl-tRNA(Gln) amidotransferase subunit F, mitochondrial (183 aa).

It belongs to the GatF family. Subunit of the heterotrimeric GatFAB amidotransferase (AdT) complex, composed of A (HER2), B (PET112) and F (YGR102C) subunits.

Its subcellular location is the mitochondrion inner membrane. It catalyses the reaction L-glutamyl-tRNA(Gln) + L-glutamine + ATP + H2O = L-glutaminyl-tRNA(Gln) + L-glutamate + ADP + phosphate + H(+). In terms of biological role, allows the formation of correctly charged Gln-tRNA(Gln) through the transamidation of misacylated Glu-tRNA(Gln) in the mitochondria. The reaction takes place in the presence of glutamine and ATP through an activated gamma-phospho-Glu-tRNA(Gln). Required for proper protein synthesis within the mitochondrion. The sequence is that of Glutamyl-tRNA(Gln) amidotransferase subunit F, mitochondrial from Saccharomyces cerevisiae (strain ATCC 204508 / S288c) (Baker's yeast).